The following is a 274-amino-acid chain: Serine/threonine-protein kinase 1 (274 aa).

A Protein kinase domain is found at 17 to 265; that stretch reads ARTALHLVNG…YEVIQKNTYW (249 aa). ATP is bound by residues 23-31 and K46; that span reads LVNGKFGKV. The active-site Proton acceptor is D133.

The protein belongs to the protein kinase superfamily. Ser/Thr protein kinase family.

The enzyme catalyses L-seryl-[protein] + ATP = O-phospho-L-seryl-[protein] + ADP + H(+). It carries out the reaction L-threonyl-[protein] + ATP = O-phospho-L-threonyl-[protein] + ADP + H(+). Its function is as follows. In vitro, can phosphorylate histone H1. This chain is Serine/threonine-protein kinase 1 (PK1), found in Lymantria dispar multicapsid nuclear polyhedrosis virus (LdMNPV).